A 334-amino-acid chain; its full sequence is MRTFVTGGSGYLGRNLLSALVARGISVRALVRSEEAAQKVQALGAQPILGTLEHRETLKEGMAGCDVLFHAAALTSARATDAEFHRANVLGTETVLAAARDARIQRMVHVSTEAVLADGRPLLQVDESHPLPKRPFAGYPATKAQAEQLVLQANGPGFTTVVVRPRFIWGADDTAFLPQLIDAIRTKRFRWVDGGRYLTSTCHVANVCEGMLLAAERGPGGEVYFLTDGAPVELRSFLTLLLETQGIKAEVGNIPFQAARAAAHLGESLWRALVPQARAPALRLAVYLLGREVTLNDDKARRELGYAGRVTHQQGLDALRQAGPAGQGAMPHRA.

Tyrosine 139 acts as the Proton donor in catalysis.

Belongs to the 3-beta-HSD family.

The catalysed reaction is aurachin B + NAD(+) + H2O = 4-hydroxy-2-methyl-3-oxo-4-[(2E,6E)-farnesyl]-3,4-dihydroquinoline 1-oxide + NADH. The enzyme catalyses 3,4-dihydroxy-2-methyl-4-[(2E,6E)-farnesyl]-3,4-dihydroquinoline 1-oxide + NAD(+) = 4-hydroxy-2-methyl-3-oxo-4-[(2E,6E)-farnesyl]-3,4-dihydroquinoline 1-oxide + NADH + H(+). Its function is as follows. Ketoreductase that catalyzes the final step in the conversion of aurachin C to aurachin B. Catalyzes the reduction of 4-hydroxy-2-methyl-3-oxo-4-[(2E,6E)-farnesyl]-3,4-dihydroquinoline-1-oxide to form 3,4-dihydroxy-2-methyl-4-[(2E,6E)-farnesyl]-3,4-dihydroquinoline 1-oxide, which then undergoes a spontaneous dehydration to form aurachin B. Accepts both NADH and NADPH, but has a preference for NADH. In Stigmatella aurantiaca, this protein is 4-hydroxy-2-methyl-3-oxo-4-farnesyl-3,4-dihydroquinoline-1-oxide ketoreductase.